The following is a 393-amino-acid chain: Homoserine O-succinyltransferase (393 aa).

The AB hydrolase-1 domain occupies 62–372 (NAVLVCHALN…PHGHDAFLLD (311 aa)). Serine 168 functions as the Nucleophile in the catalytic mechanism. Residue arginine 238 coordinates substrate. Residues aspartate 333 and histidine 366 contribute to the active site. Aspartate 367 contributes to the substrate binding site.

Belongs to the AB hydrolase superfamily. MetX family. As to quaternary structure, homodimer.

The protein localises to the cytoplasm. The catalysed reaction is L-homoserine + succinyl-CoA = O-succinyl-L-homoserine + CoA. It functions in the pathway amino-acid biosynthesis; L-methionine biosynthesis via de novo pathway; O-succinyl-L-homoserine from L-homoserine: step 1/1. Its function is as follows. Transfers a succinyl group from succinyl-CoA to L-homoserine, forming succinyl-L-homoserine. The protein is Homoserine O-succinyltransferase of Cupriavidus necator (strain ATCC 17699 / DSM 428 / KCTC 22496 / NCIMB 10442 / H16 / Stanier 337) (Ralstonia eutropha).